Reading from the N-terminus, the 179-residue chain is Large ribosomal subunit protein uL6 (179 aa).

It belongs to the universal ribosomal protein uL6 family. Part of the 50S ribosomal subunit.

In terms of biological role, this protein binds to the 23S rRNA, and is important in its secondary structure. It is located near the subunit interface in the base of the L7/L12 stalk, and near the tRNA binding site of the peptidyltransferase center. In Prochlorococcus marinus (strain NATL2A), this protein is Large ribosomal subunit protein uL6.